Reading from the N-terminus, the 258-residue chain is Pimeloyl-[acyl-carrier protein] methyl ester esterase (258 aa).

Substrate-binding positions include Trp22, 84-85, and 145-149; these read SL and FLAIQ. Ser84 serves as the catalytic Nucleophile. Catalysis depends on residues Asp209 and His238. His238 lines the substrate pocket.

It belongs to the AB hydrolase superfamily. Carboxylesterase BioH family. As to quaternary structure, monomer.

Its subcellular location is the cytoplasm. It carries out the reaction 6-carboxyhexanoyl-[ACP] methyl ester + H2O = 6-carboxyhexanoyl-[ACP] + methanol + H(+). It functions in the pathway cofactor biosynthesis; biotin biosynthesis. Functionally, the physiological role of BioH is to remove the methyl group introduced by BioC when the pimeloyl moiety is complete. It allows to synthesize pimeloyl-ACP via the fatty acid synthetic pathway through the hydrolysis of the ester bonds of pimeloyl-ACP esters. This Pseudoalteromonas atlantica (strain T6c / ATCC BAA-1087) protein is Pimeloyl-[acyl-carrier protein] methyl ester esterase.